The primary structure comprises 554 residues: Valerianol synthase TPS1C (554 aa).

The Mg(2+) site is built by Asp-307 and Asp-311. Residues 326 to 330 (VQRWD) carry the DDXXD motif motif. The Mg(2+) site is built by Asp-452, Ser-456, and Glu-460.

This sequence belongs to the terpene synthase family. The cofactor is Mg(2+).

It catalyses the reaction (2E,6E)-farnesyl diphosphate + H2O = valerianol + diphosphate. Its pathway is secondary metabolite biosynthesis; terpenoid biosynthesis. In terms of biological role, terpene synthase that catalyzes the biosynthesis of the terpene valerianol, which is a volatile compound of floral scent. This is Valerianol synthase TPS1C from Camellia hiemalis (Camellia).